The chain runs to 183 residues: ATP synthase subunit b, chloroplastic (183 aa).

A helical transmembrane segment spans residues 27 to 49 (LATNLINLTVVVGVLIFFGKGVL).

This sequence belongs to the ATPase B chain family. In terms of assembly, F-type ATPases have 2 components, F(1) - the catalytic core - and F(0) - the membrane proton channel. F(1) has five subunits: alpha(3), beta(3), gamma(1), delta(1), epsilon(1). F(0) has four main subunits: a(1), b(1), b'(1) and c(10-14). The alpha and beta chains form an alternating ring which encloses part of the gamma chain. F(1) is attached to F(0) by a central stalk formed by the gamma and epsilon chains, while a peripheral stalk is formed by the delta, b and b' chains.

The protein resides in the plastid. It localises to the chloroplast thylakoid membrane. In terms of biological role, f(1)F(0) ATP synthase produces ATP from ADP in the presence of a proton or sodium gradient. F-type ATPases consist of two structural domains, F(1) containing the extramembraneous catalytic core and F(0) containing the membrane proton channel, linked together by a central stalk and a peripheral stalk. During catalysis, ATP synthesis in the catalytic domain of F(1) is coupled via a rotary mechanism of the central stalk subunits to proton translocation. Its function is as follows. Component of the F(0) channel, it forms part of the peripheral stalk, linking F(1) to F(0). This chain is ATP synthase subunit b, chloroplastic, found in Lolium perenne (Perennial ryegrass).